Reading from the N-terminus, the 296-residue chain is 4-hydroxybenzoate octaprenyltransferase (296 aa).

Transmembrane regions (helical) follow at residues 28–48, 52–72, 102–122, 146–166, 169–189, 219–239, 241–261, and 275–295; these read PIGIYLLLWPTLWAVWIAGKG, LKTVFIFVVGVFLMRAAGCVI, ALALFAVLVGLSFVLVLFTNA, YYPQVVLGAAFSWGMPMAFTA, GDLPAAAWLLYIANLLWTVGY, VIILTLQGLALGCLMLAGARF, LGACFYIGLLAAAGCFAWEFW, and FLHNHWAGLAIFLGIVADYAV.

It belongs to the UbiA prenyltransferase family. It depends on Mg(2+) as a cofactor.

The protein resides in the cell inner membrane. The enzyme catalyses all-trans-octaprenyl diphosphate + 4-hydroxybenzoate = 4-hydroxy-3-(all-trans-octaprenyl)benzoate + diphosphate. It functions in the pathway cofactor biosynthesis; ubiquinone biosynthesis. Its function is as follows. Catalyzes the prenylation of para-hydroxybenzoate (PHB) with an all-trans polyprenyl group. Mediates the second step in the final reaction sequence of ubiquinone-8 (UQ-8) biosynthesis, which is the condensation of the polyisoprenoid side chain with PHB, generating the first membrane-bound Q intermediate 3-octaprenyl-4-hydroxybenzoate. The polypeptide is 4-hydroxybenzoate octaprenyltransferase (Pseudomonas savastanoi pv. phaseolicola (strain 1448A / Race 6) (Pseudomonas syringae pv. phaseolicola (strain 1448A / Race 6))).